The sequence spans 116 residues: MAPSTAMLIMGLLKLPRLRLATHFLPCGRLTFVQCSTMNSRPLRTLLASPDPSLPKTLTSTRLTLFAAPYVLEPTSPATCVPWPFWSPNPSLVKSIPWMTLSSNSGWSAKIPVSMI.

The first 21 residues, 1–21 (MAPSTAMLIMGLLKLPRLRLA), serve as a signal peptide directing secretion.

This is an uncharacterized protein from Saccharomyces cerevisiae (strain ATCC 204508 / S288c) (Baker's yeast).